The sequence spans 330 residues: Beta-ketoacyl-[acyl-carrier-protein] synthase III (330 aa).

Active-site residues include cysteine 114 and histidine 254. The tract at residues 255-259 is ACP-binding; it reads QANLR. Residue asparagine 284 is part of the active site.

This sequence belongs to the thiolase-like superfamily. FabH family. Homodimer.

The protein localises to the cytoplasm. It catalyses the reaction malonyl-[ACP] + acetyl-CoA + H(+) = 3-oxobutanoyl-[ACP] + CO2 + CoA. Its pathway is lipid metabolism; fatty acid biosynthesis. Its function is as follows. Catalyzes the condensation reaction of fatty acid synthesis by the addition to an acyl acceptor of two carbons from malonyl-ACP. Catalyzes the first condensation reaction which initiates fatty acid synthesis and may therefore play a role in governing the total rate of fatty acid production. Possesses both acetoacetyl-ACP synthase and acetyl transacylase activities. Its substrate specificity determines the biosynthesis of branched-chain and/or straight-chain of fatty acids. This is Beta-ketoacyl-[acyl-carrier-protein] synthase III from Roseiflexus castenholzii (strain DSM 13941 / HLO8).